Reading from the N-terminus, the 294-residue chain is 4-hydroxy-tetrahydrodipicolinate synthase (294 aa).

A pyruvate-binding site is contributed by threonine 44. Tyrosine 132 acts as the Proton donor/acceptor in catalysis. Lysine 161 acts as the Schiff-base intermediate with substrate in catalysis. Residue isoleucine 206 coordinates pyruvate.

The protein belongs to the DapA family. In terms of assembly, homotetramer; dimer of dimers.

It localises to the cytoplasm. It carries out the reaction L-aspartate 4-semialdehyde + pyruvate = (2S,4S)-4-hydroxy-2,3,4,5-tetrahydrodipicolinate + H2O + H(+). It participates in amino-acid biosynthesis; L-lysine biosynthesis via DAP pathway; (S)-tetrahydrodipicolinate from L-aspartate: step 3/4. Is not inhibited by (S)-lysine, in contrast to E.coli DapA. Functionally, catalyzes the condensation of (S)-aspartate-beta-semialdehyde [(S)-ASA] and pyruvate to 4-hydroxy-tetrahydrodipicolinate (HTPA). The protein is 4-hydroxy-tetrahydrodipicolinate synthase of Thermotoga maritima (strain ATCC 43589 / DSM 3109 / JCM 10099 / NBRC 100826 / MSB8).